We begin with the raw amino-acid sequence, 243 residues long: CTD nuclear envelope phosphatase 1 homolog (243 aa).

Residues 11–27 (ALLLLLSKVWTCICFMF) form a helical membrane-spanning segment. The region spanning 56–223 (SLVQRKTLVL…LSLLPMLDAL (168 aa)) is the FCP1 homology domain.

The protein belongs to the dullard family.

The protein localises to the membrane. It carries out the reaction O-phospho-L-seryl-[protein] + H2O = L-seryl-[protein] + phosphate. The enzyme catalyses O-phospho-L-threonyl-[protein] + H2O = L-threonyl-[protein] + phosphate. Functionally, serine/threonine protein phosphatase that may dephosphorylate and activate lipin-like phosphatases. Lipins are phosphatidate phosphatases that catalyze the conversion of phosphatidic acid to diacylglycerol and control the metabolism of fatty acids at different levels. May indirectly modulate the lipid composition of nuclear and/or endoplasmic reticulum membranes and be required for proper nuclear membrane morphology and/or dynamics. May also indirectly regulate the production of lipid droplets and triacylglycerol. The sequence is that of CTD nuclear envelope phosphatase 1 homolog (Dd) from Drosophila melanogaster (Fruit fly).